The following is a 1034-amino-acid chain: Translation initiation factor IF-2 (1034 aa).

Disordered stretches follow at residues 118–140 (AAEAVDMQPESVEAQAPAPQSVE) and 154–446 (EAEA…NESA). Composition is skewed to low complexity over residues 162-178 (TPPVETPAVEAVEAAAP) and 212-228 (PAVKAEAEPQSAQPAAS). Residues 304–315 (DRAREDARRAAE) are compositionally biased toward basic and acidic residues. The tr-type G domain maps to 535-702 (PRAPVVTVMG…NVLLQAEILE (168 aa)). A G1 region spans residues 544–551 (GHVDHGKT). Position 544-551 (544-551 (GHVDHGKT)) interacts with GTP. The segment at 569-573 (GITQH) is G2. The tract at residues 590–593 (DTPG) is G3. GTP-binding positions include 590-594 (DTPGH) and 644-647 (NKID). The G4 stretch occupies residues 644–647 (NKID). The tract at residues 680 to 682 (SAK) is G5.

This sequence belongs to the TRAFAC class translation factor GTPase superfamily. Classic translation factor GTPase family. IF-2 subfamily.

It localises to the cytoplasm. Its function is as follows. One of the essential components for the initiation of protein synthesis. Protects formylmethionyl-tRNA from spontaneous hydrolysis and promotes its binding to the 30S ribosomal subunits. Also involved in the hydrolysis of GTP during the formation of the 70S ribosomal complex. The protein is Translation initiation factor IF-2 of Bordetella avium (strain 197N).